We begin with the raw amino-acid sequence, 30 residues long: ATP-dependent Clp protease ATP-binding subunit ClpA homolog (30 aa).

It belongs to the ClpA/ClpB family.

The protein resides in the plastid. It is found in the chloroplast. May interact with a ClpP-like protease involved in degradation of denatured proteins in the chloroplast. The chain is ATP-dependent Clp protease ATP-binding subunit ClpA homolog from Pinus pinaster (Maritime pine).